The chain runs to 417 residues: Serine hydroxymethyltransferase (417 aa).

Residues leucine 120 and 124-126 (GHL) each bind (6S)-5,6,7,8-tetrahydrofolate. Lysine 229 is modified (N6-(pyridoxal phosphate)lysine). 354-356 (SPF) is a binding site for (6S)-5,6,7,8-tetrahydrofolate.

It belongs to the SHMT family. Homodimer. It depends on pyridoxal 5'-phosphate as a cofactor.

It localises to the cytoplasm. It catalyses the reaction (6R)-5,10-methylene-5,6,7,8-tetrahydrofolate + glycine + H2O = (6S)-5,6,7,8-tetrahydrofolate + L-serine. It functions in the pathway one-carbon metabolism; tetrahydrofolate interconversion. The protein operates within amino-acid biosynthesis; glycine biosynthesis; glycine from L-serine: step 1/1. Functionally, catalyzes the reversible interconversion of serine and glycine with tetrahydrofolate (THF) serving as the one-carbon carrier. This reaction serves as the major source of one-carbon groups required for the biosynthesis of purines, thymidylate, methionine, and other important biomolecules. Also exhibits THF-independent aldolase activity toward beta-hydroxyamino acids, producing glycine and aldehydes, via a retro-aldol mechanism. The protein is Serine hydroxymethyltransferase of Acinetobacter baumannii (strain AB307-0294).